Here is a 500-residue protein sequence, read N- to C-terminus: ATP synthase subunit alpha (500 aa).

169-176 is an ATP binding site; that stretch reads GDRQTGKT.

Belongs to the ATPase alpha/beta chains family. F-type ATPases have 2 components, CF(1) - the catalytic core - and CF(0) - the membrane proton channel. CF(1) has five subunits: alpha(3), beta(3), gamma(1), delta(1), epsilon(1). CF(0) has three main subunits: a(1), b(2) and c(9-12). The alpha and beta chains form an alternating ring which encloses part of the gamma chain. CF(1) is attached to CF(0) by a central stalk formed by the gamma and epsilon chains, while a peripheral stalk is formed by the delta and b chains.

It is found in the cell membrane. The catalysed reaction is ATP + H2O + 4 H(+)(in) = ADP + phosphate + 5 H(+)(out). In terms of biological role, produces ATP from ADP in the presence of a proton gradient across the membrane. The alpha chain is a regulatory subunit. This chain is ATP synthase subunit alpha, found in Clostridioides difficile (strain 630) (Peptoclostridium difficile).